Here is a 331-residue protein sequence, read N- to C-terminus: Phosphoribosylformylglycinamidine cyclo-ligase (331 aa).

It belongs to the AIR synthase family.

The protein localises to the cytoplasm. It carries out the reaction 2-formamido-N(1)-(5-O-phospho-beta-D-ribosyl)acetamidine + ATP = 5-amino-1-(5-phospho-beta-D-ribosyl)imidazole + ADP + phosphate + H(+). Its pathway is purine metabolism; IMP biosynthesis via de novo pathway; 5-amino-1-(5-phospho-D-ribosyl)imidazole from N(2)-formyl-N(1)-(5-phospho-D-ribosyl)glycinamide: step 2/2. This chain is Phosphoribosylformylglycinamidine cyclo-ligase, found in Clostridium tetani (strain Massachusetts / E88).